Reading from the N-terminus, the 200-residue chain is Blue fluorescence protein (200 aa).

2 Lumazine-binding repeats span residues 1-111 and 112-200; these read MFKG…TGGR and SLSG…AGNW.

Monomer.

It localises to the cytoplasm. In terms of biological role, blue fluorescence protein (BFP) that can bind 6,7-dimethyl-8-ribityllumazine, riboflavin, and 6-methyl-7-oxo-8-ribityllumazine as a bound fluorophore. Has no riboflavin-synthase activity. In Aliivibrio fischeri (Vibrio fischeri), this protein is Blue fluorescence protein.